A 143-amino-acid polypeptide reads, in one-letter code: MIIKTKYHGEIRIDEGQIISFENGLPGFNDETQFVVLPLSEDSPFLALQSVKQEHIAFIVASPFIFFKGYEFDIDHATLELLHIEDIEDVEVMAILTLEEPFENTTANLKAPIIVNKKEMKAKQIILHDASYETKHLIGGGSC.

This sequence belongs to the FliW family. In terms of assembly, interacts with translational regulator CsrA and flagellin(s).

The protein localises to the cytoplasm. Acts as an anti-CsrA protein, binds CsrA and prevents it from repressing translation of its target genes, one of which is flagellin. Binds to flagellin and participates in the assembly of the flagellum. This is Flagellar assembly factor FliW from Bacillus velezensis (strain DSM 23117 / BGSC 10A6 / LMG 26770 / FZB42) (Bacillus amyloliquefaciens subsp. plantarum).